The following is a 697-amino-acid chain: General transcription factor IIH subunit 1 (697 aa).

Residues 115 to 136 (LPVSASNGSNTTSPTNGTSPIN) are compositionally biased toward low complexity. Disordered regions lie at residues 115 to 141 (LPVS…TSPT) and 228 to 250 (KNDS…ADVR). BSD domains follow at residues 174-231 (LSKL…KNDS) and 255-307 (TPNA…YFYR). Residues 412–422 (KNLKKTKKDEN) are compositionally biased toward basic and acidic residues. The interval 412-462 (KNLKKTKKDENSTSTPTTTTTTTNTTNTTNTTTTTTTNNTTIKDPNLYNGD) is disordered. Residues 423-452 (STSTPTTTTTTTNTTNTTNTTTTTTTNNTT) are compositionally biased toward low complexity.

Belongs to the TFB1 family. As to quaternary structure, component of the 7-subunit TFIIH core complex composed of XPB/repB, XPD/repD, gtf2h1, gtf2h2, gtf2h3, gtf2h4 and gtf2h5, which is active in NER. The core complex associates with the 3-subunit CDK-activating kinase (CAK) module composed of cycH/cyclin H, cdk7 and mnat1 to form the 10-subunit holoenzyme (holo-TFIIH) active in transcription.

Its subcellular location is the nucleus. Component of the general transcription and DNA repair factor IIH (TFIIH) core complex, which is involved in general and transcription-coupled nucleotide excision repair (NER) of damaged DNA and, when complexed to CAK, in RNA transcription by RNA polymerase II. In NER, TFIIH acts by opening DNA around the lesion to allow the excision of the damaged oligonucleotide and its replacement by a new DNA fragment. In transcription, TFIIH has an essential role in transcription initiation. When the pre-initiation complex (PIC) has been established, TFIIH is required for promoter opening and promoter escape. Phosphorylation of the C-terminal tail (CTD) of the largest subunit of RNA polymerase II by the kinase module CAK controls the initiation of transcription. This Dictyostelium discoideum (Social amoeba) protein is General transcription factor IIH subunit 1 (gtf2h1).